Consider the following 307-residue polypeptide: Aspartate carbamoyltransferase catalytic subunit (307 aa).

The carbamoyl phosphate site is built by Arg54 and Thr55. Residue Lys83 participates in L-aspartate binding. Carbamoyl phosphate contacts are provided by Arg104, His132, and Gln135. L-aspartate-binding residues include Arg165 and Arg228. The carbamoyl phosphate site is built by Leu267 and Pro268.

Belongs to the aspartate/ornithine carbamoyltransferase superfamily. ATCase family. In terms of assembly, heterododecamer (2C3:3R2) of six catalytic PyrB chains organized as two trimers (C3), and six regulatory PyrI chains organized as three dimers (R2).

The catalysed reaction is carbamoyl phosphate + L-aspartate = N-carbamoyl-L-aspartate + phosphate + H(+). The protein operates within pyrimidine metabolism; UMP biosynthesis via de novo pathway; (S)-dihydroorotate from bicarbonate: step 2/3. Functionally, catalyzes the condensation of carbamoyl phosphate and aspartate to form carbamoyl aspartate and inorganic phosphate, the committed step in the de novo pyrimidine nucleotide biosynthesis pathway. The protein is Aspartate carbamoyltransferase catalytic subunit of Clostridium botulinum (strain Alaska E43 / Type E3).